A 492-amino-acid chain; its full sequence is MQEAPAALPTEPGPSPVPAFLGKLWALVGDPGTDHLIRWSPSGTSFLVSDQSRFAKEVLPQYFKHSNMASFVRQLNMYGFRKVVSIEQGGLLRPERDHVEFQHPSFVRGREQLLERVRRKVPALRSDDGRWRPEDLGRLLGEVQALRGVQEITEARLRELRQQNEILWREVVTLRQSHGQQHRVIGKLIQCLFGPLQTGSSGAGAKRKLSLMLDEGSSCPTPAKFNTCPLPGALLQDPYFIQSPLPETTLGLSSSHRTRGPIISDIHEDSPSPDGTRLSPSSGGRREKGLALLKEEPASPGGEGEAGLALAPNECDFCVTAPPPLSVAVVQAILEGKGNFSPEGPRNAQQPEPRGPREVPDRGTLGLDRGARSPENLLPPMLLRAPPESVEPAGPLDVLGPSHQGREWTLMDLDMELSLMQPLGPERSETELAVKGLNSPGPGKDSTLGAPLLLDVQAALGGPALSLPGALTIYSTPESRANYLGPGANPSP.

Residues 17-121 (VPAFLGKLWA…QLLERVRRKV (105 aa)) mediate DNA binding. Residues 129–203 (GRWRPEDLGR…GPLQTGSSGA (75 aa)) form a hydrophobic repeat HR-A/B region. The interactions with DUSP26, MAPK1 and MAPK2 stretch occupies residues 245 to 323 (LPETTLGLSS…ECDFCVTAPP (79 aa)). The tract at residues 250–286 (LGLSSSHRTRGPIISDIHEDSPSPDGTRLSPSSGGRR) is disordered. A Glycyl lysine isopeptide (Lys-Gly) (interchain with G-Cter in SUMO) cross-link involves residue Lys294. Ser299 bears the Phosphoserine mark. The segment at 337-378 (KGNFSPEGPRNAQQPEPRGPREVPDRGTLGLDRGARSPENLL) is disordered. The hydrophobic repeat HR-C stretch occupies residues 365–390 (LGLDRGARSPENLLPPMLLRAPPESV).

It belongs to the HSF family. In terms of assembly, homotrimer. Exhibits constitutive DNA binding and forms trimers even in the absence of stress. Interacts with ALKBH4, DUSP26, MAPK1, MAPK2, MAPK8 and MAP kinase p38. Post-translationally, phosphorylated mainly on serine residues. Phosphorylation on Ser-299 promotes sumoylation on Lys-294. Constitutively sumoylated. Sumoylation represses the transcriptional activity and is promoted by phosphorylation on Ser-299.

Its subcellular location is the nucleus. Heat-shock transcription factor that specifically binds heat shock promoter elements (HSE). Required for denucleation and organelle rupture and degradation that occur during eye lens terminal differentiation, when fiber cells that compose the lens degrade all membrane-bound organelles in order to provide lens with transparency to allow the passage of light. In this process, may regulate denucleation of lens fiber cells in part by activating DNASE2B transcription. May be involved in DNA repair through the transcriptional regulation of RAD51. May up-regulate p53/TP53 protein in eye lens fiber cells, possibly through protein stabilization. In the eye lens, controls the expression of alpha-crystallin B chain/CRYAB and consequently may be involved in the regulation of lysosomal acidification. The sequence is that of Heat shock factor protein 4 (HSF4) from Canis lupus familiaris (Dog).